Consider the following 151-residue polypeptide: Ribonuclease H (151 aa).

Positions 1 to 146 (MPDLYAYTDG…ADELARAGMA (146 aa)) constitute an RNase H type-1 domain. Mg(2+)-binding residues include aspartate 9, glutamate 52, aspartate 74, and aspartate 138.

The protein belongs to the RNase H family. In terms of assembly, monomer. The cofactor is Mg(2+).

It is found in the cytoplasm. It carries out the reaction Endonucleolytic cleavage to 5'-phosphomonoester.. Functionally, endonuclease that specifically degrades the RNA of RNA-DNA hybrids. This is Ribonuclease H from Cereibacter sphaeroides (strain ATCC 17029 / ATH 2.4.9) (Rhodobacter sphaeroides).